A 156-amino-acid chain; its full sequence is Transcription elongation factor GreA (156 aa).

Residues 6–75 adopt a coiled-coil conformation; it reads IYLTKEGYEK…ELENMLSKAE (70 aa).

This sequence belongs to the GreA/GreB family.

Necessary for efficient RNA polymerase transcription elongation past template-encoded arresting sites. The arresting sites in DNA have the property of trapping a certain fraction of elongating RNA polymerases that pass through, resulting in locked ternary complexes. Cleavage of the nascent transcript by cleavage factors such as GreA or GreB allows the resumption of elongation from the new 3'terminus. GreA releases sequences of 2 to 3 nucleotides. The chain is Transcription elongation factor GreA from Thermosipho africanus (strain TCF52B).